Here is a 276-residue protein sequence, read N- to C-terminus: Type II pantothenate kinase (276 aa).

8-15 contacts ATP; the sequence is DAGGTLTK. Catalysis depends on Glu76, which acts as the Proton acceptor. ATP-binding positions include Thr105, 127 to 131, Phe143, and Ser230; that span reads GGTIM.

It belongs to the type II pantothenate kinase family. Homodimer.

It is found in the cytoplasm. The catalysed reaction is (R)-pantothenate + ATP = (R)-4'-phosphopantothenate + ADP + H(+). It participates in cofactor biosynthesis; coenzyme A biosynthesis; CoA from (R)-pantothenate: step 1/5. Functionally, catalyzes the phosphorylation of pantothenate (Pan), the first step in CoA biosynthesis. This Bacillus cereus (strain ATCC 10987 / NRS 248) protein is Type II pantothenate kinase.